Reading from the N-terminus, the 269-residue chain is Type II iodothyronine deiodinase (269 aa).

Residues 1–9 are Lumenal-facing; it reads MGILSVDLL. Residues 10 to 34 traverse the membrane as a helical; Signal-anchor for type III membrane protein segment; sequence ITLQILPVFFSNCLFLALYDSVILL. The Cytoplasmic portion of the chain corresponds to 35–269; the sequence is KHVVLLLSRS…KNFSKRUKKT (235 aa). Sec-133 is an active-site residue. Non-standard amino acids (selenocysteine) are located at Sec-133 and Sec-266.

Belongs to the iodothyronine deiodinase family. Predominantly monomer. Can form homodimers but homodimerization is not essential for enzyme activity. Interacts with USP20 and USP33. Interacts with MARCHF6. In terms of processing, ubiquitinated by MARCHF6, leading to its degradation by the proteasome. Deubiquitinated by USP20 and USP33. In terms of tissue distribution, more expressed in pituitary than in brain, low to undetectable levels in thyroid and skeletal muscle.

Its subcellular location is the endoplasmic reticulum membrane. It catalyses the reaction 3,3',5-triiodo-L-thyronine + iodide + A + H(+) = L-thyroxine + AH2. The enzyme catalyses 3,3'-diiodo-L-thyronine + iodide + A + H(+) = 3,3',5'-triiodo-L-thyronine + AH2. The catalysed reaction is 3'-iodo-L-thyronine + iodide + A + H(+) = 3',5'-diiodo-L-thyronine + AH2. It carries out the reaction 3,3'-diiodothyronamine + iodide + A + H(+) = 3,3',5'-triiodothyronamine + AH2. It catalyses the reaction 3'-iodothyronamine + iodide + A + H(+) = 3',5'-diiodothyronamine + AH2. Its function is as follows. Plays a crucial role in the metabolism of thyroid hormones (TH) and has specific roles in TH activation and inactivation by deiodination.Catalyzes the deiodination of L-thyroxine (T4) to 3,5,3'-triiodothyronine (T3) and 3,3',5'-triiodothyronine (rT3) to 3,3'-diiodothyronine (3,3'-T2) via outer-ring deiodination (ORD). Catalyzes the deiodination of 3',5'-diiodothyronine (3',5'-T2) to 3'-monoiodothyronine (3'-T1) via ORD. Catalyzes the phenolic ring deiodinations of 3,3',5'-triiodothyronamine and 3',5'- diiodothyronamine. The chain is Type II iodothyronine deiodinase (DIO2) from Sus scrofa (Pig).